Reading from the N-terminus, the 79-residue chain is DNA-directed RNA polymerase subunit omega (79 aa).

The protein belongs to the RNA polymerase subunit omega family. In terms of assembly, the RNAP catalytic core consists of 2 alpha, 1 beta, 1 beta' and 1 omega subunit. When a sigma factor is associated with the core the holoenzyme is formed, which can initiate transcription.

The enzyme catalyses RNA(n) + a ribonucleoside 5'-triphosphate = RNA(n+1) + diphosphate. Its function is as follows. Promotes RNA polymerase assembly. Latches the N- and C-terminal regions of the beta' subunit thereby facilitating its interaction with the beta and alpha subunits. This Thermotoga petrophila (strain ATCC BAA-488 / DSM 13995 / JCM 10881 / RKU-1) protein is DNA-directed RNA polymerase subunit omega.